We begin with the raw amino-acid sequence, 963 residues long: Spliceosome associated factor 3, U4/U6 recycling protein (963 aa).

Residues methionine 1–glutamate 11 show a composition bias toward low complexity. Disordered regions lie at residues methionine 1–arginine 36 and lysine 49–glutamate 86. Alanine 2 carries the post-translational modification N-acetylalanine. Residues alanine 2–serine 351 form a mediates interaction with PRPF3 region. Phosphoserine is present on residues serine 10 and serine 16. A compositionally biased stretch (basic and acidic residues) spans alanine 14–aspartate 23. Positions lysine 21–alanine 46 form a coiled coil. The segment covering glutamine 57–glutamate 69 has biased composition (acidic residues). Residues glutamate 82–tyrosine 110 adopt a coiled-coil conformation. HAT repeat units lie at residues glycine 126 to serine 158, leucine 164 to glycine 195, glycine 201 to alanine 237, alanine 242 to aspartate 275, glycine 324 to arginine 356, lysine 359 to arginine 391, valine 394 to arginine 430, and asparagine 487 to alanine 520. Serine 215 is subject to Phosphoserine. The required for interaction with USP4 stretch occupies residues asparagine 487 to alanine 520. The tract at residues cysteine 537 to asparagine 953 is necessary and sufficient for U6 snRNA binding. Residues leucine 559–glycine 619 are a coiled coil. The interval glutamine 600–cysteine 670 is required for nuclear localization. Positions arginine 601–lysine 608 match the Nuclear localization signal motif. Residues lysine 608 to glycine 619 show a composition bias toward basic and acidic residues. The tract at residues lysine 608–proline 712 is disordered. Residues proline 620–aspartate 635 are compositionally biased toward basic residues. The span at arginine 644–threonine 657 shows a compositional bias: acidic residues. Serine 650 bears the Phosphoserine mark. Residue threonine 657 is modified to Phosphothreonine. The span at valine 695–proline 712 shows a compositional bias: basic and acidic residues. The region spanning isoleucine 704 to aspartate 782 is the RRM 1 domain. Phosphoserine occurs at positions 769, 795, and 852. The region spanning histidine 801 to proline 878 is the RRM 2 domain. Basic and acidic residues predominate over residues proline 900–glycine 909. Arginine 906 is modified (omega-N-methylarginine).

As to quaternary structure, component of the 7SK snRNP complex at least composed of P-TEFb (composed of CDK9 and CCNT1/cyclin-T1), HEXIM1, HEXIM2, BCDIN3, SART3 proteins and 7SK and U6 snRNAs. Interacts with AGO1 and AGO2. Interacts with PRPF3 and USP4; the interaction with PRPF3 is direct and recruits USP4 to its substrate PRPF3. Interacts with USP15; the interaction is direct.

The protein localises to the nucleus. Its subcellular location is the nucleoplasm. The protein resides in the cajal body. It localises to the nucleus speckle. It is found in the cytoplasm. Functionally, U6 snRNP-binding protein that functions as a recycling factor of the splicing machinery. Promotes the initial reassembly of U4 and U6 snRNPs following their ejection from the spliceosome during its maturation. Also binds U6atac snRNPs and may function as a recycling factor for U4atac/U6atac spliceosomal snRNP, an initial step in the assembly of U12-type spliceosomal complex. The U12-type spliceosomal complex plays a role in the splicing of introns with non-canonical splice sites. May also function as a substrate-targeting factor for deubiquitinases like USP4 and USP15. Recruits USP4 to ubiquitinated PRPF3 within the U4/U5/U6 tri-snRNP complex, promoting PRPF3 deubiquitination and thereby regulating the spliceosome U4/U5/U6 tri-snRNP spliceosomal complex disassembly. May also recruit the deubiquitinase USP15 to histone H2B and mediate histone deubiquitination, thereby regulating gene expression and/or DNA repair. May play a role in hematopoiesis probably through transcription regulation of specific genes including MYC. The polypeptide is Spliceosome associated factor 3, U4/U6 recycling protein (Pongo abelii (Sumatran orangutan)).